The primary structure comprises 65 residues: Beta-toxin Tf4a (65 aa).

Residues 2–63 form the LCN-type CS-alpha/beta domain; sequence KEGYPADSKG…VWDSATNKCG (62 aa). 4 disulfides stabilise this stretch: Cys12/Cys62, Cys16/Cys38, Cys24/Cys43, and Cys28/Cys45. Cysteine amide is present on Cys62.

The protein belongs to the long (4 C-C) scorpion toxin superfamily. Sodium channel inhibitor family. Alpha subfamily. In terms of tissue distribution, expressed by the venom gland.

The protein localises to the secreted. In terms of biological role, alpha toxins bind voltage-independently at site-3 of sodium channels (Nav) and inhibit the inactivation of the activated channels, thereby blocking neuronal transmission. This toxin is toxic to frogs but non-toxic to insect larvae (T.molitor), mammals (rats) and crustaceans (crabs) at the doses assayed. This Tityus fasciolatus (Central Brazilian scorpion) protein is Beta-toxin Tf4a.